The primary structure comprises 191 residues: Small ribosomal subunit protein uS5 (191 aa).

Residues 21-84 enclose the S5 DRBM domain; it reads FADRLVAINR…EQAKRQMIRV (64 aa). Positions 155 to 191 are disordered; that stretch reads LRKESSPRSVAQRRGKKVADILPKVDAAPAPAETAEA. A compositionally biased stretch (low complexity) spans 181–191; it reads AAPAPAETAEA.

The protein belongs to the universal ribosomal protein uS5 family. Part of the 30S ribosomal subunit. Contacts proteins S4 and S8.

Its function is as follows. With S4 and S12 plays an important role in translational accuracy. Functionally, located at the back of the 30S subunit body where it stabilizes the conformation of the head with respect to the body. The sequence is that of Small ribosomal subunit protein uS5 from Roseobacter denitrificans (strain ATCC 33942 / OCh 114) (Erythrobacter sp. (strain OCh 114)).